Reading from the N-terminus, the 546-residue chain is CTP synthase (546 aa).

The segment at Met1–Ile269 is amidoligase domain. CTP is bound at residue Ser17. Ser17 serves as a coordination point for UTP. ATP contacts are provided by residues Ser18 to Leu23 and Asp75. Mg(2+) contacts are provided by Asp75 and Glu143. CTP contacts are provided by residues Asp150–Glu152, Lys190–Gln195, and Lys226. Residues Lys190 to Gln195 and Lys226 each bind UTP. The 243-residue stretch at Arg295–Ala537 folds into the Glutamine amidotransferase type-1 domain. Position 357 (Gly357) interacts with L-glutamine. Cys384 serves as the catalytic Nucleophile; for glutamine hydrolysis. Residues Leu385–Gln388, Glu408, and Arg465 each bind L-glutamine. Active-site residues include His510 and Glu512.

The protein belongs to the CTP synthase family. In terms of assembly, homotetramer.

The enzyme catalyses UTP + L-glutamine + ATP + H2O = CTP + L-glutamate + ADP + phosphate + 2 H(+). The catalysed reaction is L-glutamine + H2O = L-glutamate + NH4(+). It carries out the reaction UTP + NH4(+) + ATP = CTP + ADP + phosphate + 2 H(+). The protein operates within pyrimidine metabolism; CTP biosynthesis via de novo pathway; CTP from UDP: step 2/2. With respect to regulation, allosterically activated by GTP, when glutamine is the substrate; GTP has no effect on the reaction when ammonia is the substrate. The allosteric effector GTP functions by stabilizing the protein conformation that binds the tetrahedral intermediate(s) formed during glutamine hydrolysis. Inhibited by the product CTP, via allosteric rather than competitive inhibition. Catalyzes the ATP-dependent amination of UTP to CTP with either L-glutamine or ammonia as the source of nitrogen. Regulates intracellular CTP levels through interactions with the four ribonucleotide triphosphates. This chain is CTP synthase, found in Myxococcus xanthus (strain DK1622).